The sequence spans 286 residues: Forkhead box protein E3 (286 aa).

A disordered region spans residues 1–62; sequence MDAHVAFSGF…GRRRRRPLQR (62 aa). The segment at residues 64–158 is a DNA-binding region (fork-head); sequence KPPYSYIALI…DNGSFLRRRK (95 aa).

It localises to the nucleus. In terms of biological role, transcription factor that controls lens epithelial cell growth through regulation of proliferation, apoptosis and cell cycle. During lens development, controls the ratio of the lens fiber cells to the cells of the anterior lens epithelium by regulating the rate of proliferation and differentiation. Controls lens vesicle closure and subsequent separation of the lens vesicle from ectoderm. Controls the expression of DNAJB1 in a pathway that is crucial for the development of the anterior segment of the eye. The chain is Forkhead box protein E3 (Foxe3) from Rattus norvegicus (Rat).